The chain runs to 332 residues: MQEDSKVYDITVIGGGPVGLFTAFYGGMRQASVKIIESLPQLGGQLSALYPEKYIYDVAGFPKIRAQELVDNLKEQMDKFDQTICLEQAVETVEKQADGIFKLVTNQEIHYSKTIIITAGNGAFQPRKLELDAAESFEGSNLHYFINDLNQFAGRRVAVLGGGDSAVDWALMLEPIAKEVSIIHRRDKFRAHEHSVENLHNSKVNVVTPFVPTELIGEDRIEQIVLEEVKGDKKQVLDVDDVIVNFGFVSSLGPIKQWGLEIEKNSIVVKSTMETNIEGFYAAGDICTYEGKVKLIASGFGEAPTAVNNAKAYMDPKARVQPLHSTSLFENK.

Residues glutamate 37, glutamine 45, tyrosine 50, valine 90, phenylalanine 124, aspartate 285, and threonine 326 each coordinate FAD.

It belongs to the ferredoxin--NADP reductase type 2 family. As to quaternary structure, homodimer. FAD serves as cofactor.

It carries out the reaction 2 reduced [2Fe-2S]-[ferredoxin] + NADP(+) + H(+) = 2 oxidized [2Fe-2S]-[ferredoxin] + NADPH. The protein is Ferredoxin--NADP reductase 2 of Bacillus pumilus (strain SAFR-032).